A 622-amino-acid polypeptide reads, in one-letter code: Threonine--tRNA ligase (622 aa).

An editing domain region spans residues 1 to 136; it reads MKTLLIHSDY…PLSELSRKIT (136 aa). The tract at residues 199–498 is catalytic; sequence PHVKYIKEKE…TLENKPPALP (300 aa). Residues Cys-291, His-343, and His-467 each coordinate Zn(2+).

Belongs to the class-II aminoacyl-tRNA synthetase family. Homodimer. The cofactor is Zn(2+).

It is found in the cytoplasm. The enzyme catalyses tRNA(Thr) + L-threonine + ATP = L-threonyl-tRNA(Thr) + AMP + diphosphate + H(+). Functionally, catalyzes the attachment of threonine to tRNA(Thr) in a two-step reaction: L-threonine is first activated by ATP to form Thr-AMP and then transferred to the acceptor end of tRNA(Thr). Also edits incorrectly charged L-seryl-tRNA(Thr). The chain is Threonine--tRNA ligase from Methanococcus maripaludis (strain DSM 14266 / JCM 13030 / NBRC 101832 / S2 / LL).